Reading from the N-terminus, the 122-residue chain is Histone H2B subacrosomal variant (122 aa).

Basic residues predominate over residues 1–25 (MARNVTKRNKRCRGHQKAIYKKKSH). Positions 1-30 (MARNVTKRNKRCRGHQKAIYKKKSHSSSES) are disordered.

Belongs to the histone H2B family. In terms of tissue distribution, testis-specific. Restricted to the spermatid population of seminiferous epithelium. Not present in Sertoli cells, spermatogonia, spermatocytes or cells of the interstitial tissue (at protein level).

It localises to the cytoplasm. In terms of biological role, may act as an acrosome-nuclear docking protein in sperm. This Bos taurus (Bovine) protein is Histone H2B subacrosomal variant (SUBH2BV).